We begin with the raw amino-acid sequence, 1285 residues long: Period circadian protein homolog 1 (1285 aa).

The segment at 1 to 134 (MSGPLEGADG…SSEQSARART (134 aa)) is disordered. Residues 1–151 (MSGPLEGADG…LRELKLRLPP (151 aa)) form an interaction with BTRC region. 2 stretches are compositionally biased toward low complexity: residues 48 to 57 (NSNGSSGNES) and 64 to 115 (GASQ…ASSE). The span at 116-132 (QDNPSTSGCSSEQSARA) shows a compositional bias: polar residues. Position 121 is a phosphothreonine; by CSNK1E (Thr-121). 2 positions are modified to phosphoserine; by CSNK1E: Ser-122 and Ser-126. A Nuclear export signal 1 motif is present at residues 138 to 147 (LMTALRELKL). PAS domains are found at residues 208–275 (ITSE…PFRL) and 348–414 (YEAP…KILQ). A PAC domain is found at 422–465 (HSPIRFCARNGEYVTMDTSWAGFVHPWSRKVAFVLGRHKVRTAP). A Nuclear export signal 2 motif is present at residues 489 to 498 (LSEQIHRLLL). Disordered stretches follow at residues 503–544 (SSSP…PAPV) and 643–694 (TKRK…KEPV). Composition is skewed to low complexity over residues 523 to 533 (SPGSSSDSNGG) and 648 to 658 (ASSSSCTASSA). The required for phosphorylation by CSNK1E stretch occupies residues 592 to 811 (ELEVVPMPNQ…GLDSSSATPS (220 aa)). 4 positions are modified to phosphoserine: Ser-657, Ser-659, Ser-700, and Ser-811. Disordered regions lie at residues 802-867 (GLDS…PPST) and 931-1030 (LSQA…DALS). A Nuclear localization signal motif is present at residues 820-836 (VPPGRRHHCRSKAKRSR). Residues 823-840 (GRRHHCRSKAKRSRHHHT) are compositionally biased toward basic residues. Residues 853 to 867 (SPVPPSGPWPPPPST) are compositionally biased toward pro residues. The segment covering 943–954 (ASHSPSPSLTPL) has biased composition (low complexity). Residues 967 to 979 (FNSRCSSPLQLNL) show a composition bias toward polar residues. 2 positions are modified to phosphoserine: Ser-972 and Ser-973. A Nuclear export signal 3 motif is present at residues 975–982 (LQLNLLQL). An LXXLL motif is present at residues 1036–1040 (LELLL). The segment covering 1045 to 1055 (RSGTGSAASGS) has biased composition (low complexity). Disordered regions lie at residues 1045 to 1091 (RSGT…SKYF) and 1202 to 1285 (IQDP…NSTS). Over residues 1056–1070 (LGSGLGSGSGSGSHE) the composition is skewed to gly residues. A compositionally biased stretch (low complexity) spans 1071–1088 (GGSTSASITRSSQSSHTS). The segment at 1142 to 1285 (SRDRASVLKQ…ALPAEENSTS (144 aa)) is CRY binding domain. Positions 1229 to 1241 (GEGGGGGGGGGEG) are enriched in gly residues. Positions 1269–1285 (GGSSSSPALPAEENSTS) are enriched in polar residues.

In terms of assembly, homodimer. Component of the circadian core oscillator, which includes the CRY proteins, CLOCK or NPAS2, BMAL1 or BMAL2, CSNK1D and/or CSNK1E, TIMELESS, and the PER proteins. Interacts directly with TIMELESS, PER2, PER3, CRY1 and CRY2. Interacts with BMAL1 and CLOCK. Interacts with GPRASP1. Interacts (phosphorylated) with BTRC and FBXW11; the interactions trigger proteasomal degradation. Interacts with NONO, WDR5 and SFPQ. Interacts with USP2. Interacts with HNF4A. Post-translationally, phosphorylated on serine residues by CSNK1D, CSNK1E and probably also by CSNK1G2. Phosphorylation by CSNK1D or CSNK1E promotes nuclear location of PER proteins as well as ubiquitination and subsequent degradation. May be dephosphorylated by PP1. Ubiquitinated; requires phosphorylation by CSNK1E and interaction with BTRC and FBXW11. Deubiquitinated by USP2. Expressed in the brain, mainly in the suprachiasmatic nucleus (SCN). Expression also found in the harderian gland, lung, eye, intestine, liver and skeletal muscle.

The protein localises to the nucleus. The protein resides in the cytoplasm. Its function is as follows. Transcriptional repressor which forms a core component of the circadian clock. The circadian clock, an internal time-keeping system, regulates various physiological processes through the generation of approximately 24 hour circadian rhythms in gene expression, which are translated into rhythms in metabolism and behavior. It is derived from the Latin roots 'circa' (about) and 'diem' (day) and acts as an important regulator of a wide array of physiological functions including metabolism, sleep, body temperature, blood pressure, endocrine, immune, cardiovascular, and renal function. Consists of two major components: the central clock, residing in the suprachiasmatic nucleus (SCN) of the brain, and the peripheral clocks that are present in nearly every tissue and organ system. Both the central and peripheral clocks can be reset by environmental cues, also known as Zeitgebers (German for 'timegivers'). The predominant Zeitgeber for the central clock is light, which is sensed by retina and signals directly to the SCN. The central clock entrains the peripheral clocks through neuronal and hormonal signals, body temperature and feeding-related cues, aligning all clocks with the external light/dark cycle. Circadian rhythms allow an organism to achieve temporal homeostasis with its environment at the molecular level by regulating gene expression to create a peak of protein expression once every 24 hours to control when a particular physiological process is most active with respect to the solar day. Transcription and translation of core clock components (CLOCK, NPAS2, BMAL1, BMAL2, PER1, PER2, PER3, CRY1 and CRY2) plays a critical role in rhythm generation, whereas delays imposed by post-translational modifications (PTMs) are important for determining the period (tau) of the rhythms (tau refers to the period of a rhythm and is the length, in time, of one complete cycle). A diurnal rhythm is synchronized with the day/night cycle, while the ultradian and infradian rhythms have a period shorter and longer than 24 hours, respectively. Disruptions in the circadian rhythms contribute to the pathology of cardiovascular diseases, cancer, metabolic syndromes and aging. A transcription/translation feedback loop (TTFL) forms the core of the molecular circadian clock mechanism. Transcription factors, CLOCK or NPAS2 and BMAL1 or BMAL2, form the positive limb of the feedback loop, act in the form of a heterodimer and activate the transcription of core clock genes and clock-controlled genes (involved in key metabolic processes), harboring E-box elements (5'-CACGTG-3') within their promoters. The core clock genes: PER1/2/3 and CRY1/2 which are transcriptional repressors form the negative limb of the feedback loop and interact with the CLOCK|NPAS2-BMAL1|BMAL2 heterodimer inhibiting its activity and thereby negatively regulating their own expression. This heterodimer also activates nuclear receptors NR1D1/2 and RORA/B/G, which form a second feedback loop and which activate and repress BMAL1 transcription, respectively. Regulates circadian target genes expression at post-transcriptional levels, but may not be required for the repression at transcriptional level. Controls PER2 protein decay. Represses CRY2 preventing its repression on CLOCK/BMAL1 target genes such as FXYD5 and SCNN1A in kidney and PPARA in liver. Besides its involvement in the maintenance of the circadian clock, has an important function in the regulation of several processes. Participates in the repression of glucocorticoid receptor NR3C1/GR-induced transcriptional activity by reducing the association of NR3C1/GR to glucocorticoid response elements (GREs) by BMAL1:CLOCK. Plays a role in the modulation of the neuroinflammatory state via the regulation of inflammatory mediators release, such as CCL2 and IL6. In spinal astrocytes, negatively regulates the MAPK14/p38 and MAPK8/JNK MAPK cascades as well as the subsequent activation of NFkappaB. Coordinately regulates the expression of multiple genes that are involved in the regulation of renal sodium reabsorption. Can act as gene expression activator in a gene and tissue specific manner, in kidney enhances WNK1 and SLC12A3 expression in collaboration with CLOCK. Modulates hair follicle cycling. Represses the CLOCK-BMAL1 induced transcription of BHLHE40/DEC1. In Spalax judaei (Judean Mountains blind mole rat), this protein is Period circadian protein homolog 1 (PER1).